A 632-amino-acid polypeptide reads, in one-letter code: Mediator of RNA polymerase II transcription subunit 17 (632 aa).

Disordered regions lie at residues 1–21 and 50–72; these read MSDSFTVSLRPIREKRDRPDS and EDKHKDHWEEDDEGDKESTDLET. Over residues 11-21 the composition is skewed to basic and acidic residues; it reads PIREKRDRPDS. The span at 58 to 72 shows a compositional bias: acidic residues; the sequence is EEDDEGDKESTDLET.

The protein belongs to the Mediator complex subunit 17 family. Component of the Mediator complex.

Its subcellular location is the nucleus. Functionally, component of the Mediator complex, a coactivator involved in the regulated transcription of nearly all RNA polymerase II-dependent genes. Mediator functions as a bridge to convey information from gene-specific regulatory proteins to the basal RNA polymerase II transcription machinery. Mediator is recruited to promoters by direct interactions with regulatory proteins and serves as a scaffold for the assembly of a functional preinitiation complex with RNA polymerase II and the general transcription factors. The protein is Mediator of RNA polymerase II transcription subunit 17 (srb4) of Emericella nidulans (strain FGSC A4 / ATCC 38163 / CBS 112.46 / NRRL 194 / M139) (Aspergillus nidulans).